The primary structure comprises 477 residues: Ribulose bisphosphate carboxylase large chain (477 aa).

The propeptide occupies 1–2 (MS). The residue at position 3 (P3) is an N-acetylproline. N123 and T173 together coordinate substrate. Catalysis depends on K175, which acts as the Proton acceptor. Position 177 (K177) interacts with substrate. The Mg(2+) site is built by K201, D203, and E204. An N6-carboxylysine modification is found at K201. H294 serves as the catalytic Proton acceptor. 3 residues coordinate substrate: R295, H327, and S379.

This sequence belongs to the RuBisCO large chain family. Type I subfamily. In terms of assembly, heterohexadecamer of 8 large chains and 8 small chains; disulfide-linked. The disulfide link is formed within the large subunit homodimers. It depends on Mg(2+) as a cofactor. Post-translationally, the disulfide bond which can form in the large chain dimeric partners within the hexadecamer appears to be associated with oxidative stress and protein turnover.

It localises to the plastid. Its subcellular location is the chloroplast. It carries out the reaction 2 (2R)-3-phosphoglycerate + 2 H(+) = D-ribulose 1,5-bisphosphate + CO2 + H2O. The enzyme catalyses D-ribulose 1,5-bisphosphate + O2 = 2-phosphoglycolate + (2R)-3-phosphoglycerate + 2 H(+). RuBisCO catalyzes two reactions: the carboxylation of D-ribulose 1,5-bisphosphate, the primary event in carbon dioxide fixation, as well as the oxidative fragmentation of the pentose substrate in the photorespiration process. Both reactions occur simultaneously and in competition at the same active site. The chain is Ribulose bisphosphate carboxylase large chain from Avena sativa (Oat).